The primary structure comprises 145 residues: Peptide methionine sulfoxide reductase MsrB (145 aa).

The MsrB domain occupies lysine 6–valine 129. Cysteine 118 acts as the Nucleophile in catalysis.

This sequence belongs to the MsrB Met sulfoxide reductase family.

The catalysed reaction is L-methionyl-[protein] + [thioredoxin]-disulfide + H2O = L-methionyl-(R)-S-oxide-[protein] + [thioredoxin]-dithiol. This chain is Peptide methionine sulfoxide reductase MsrB, found in Listeria monocytogenes serovar 1/2a (strain ATCC BAA-679 / EGD-e).